A 120-amino-acid polypeptide reads, in one-letter code: Aspartate 1-decarboxylase (120 aa).

S25 (schiff-base intermediate with substrate; via pyruvic acid) is an active-site residue. S25 carries the post-translational modification Pyruvic acid (Ser). Residue T57 participates in substrate binding. The active-site Proton donor is Y58. 73-75 (GAA) is a binding site for substrate.

The protein belongs to the PanD family. Heterooctamer of four alpha and four beta subunits. Pyruvate serves as cofactor. In terms of processing, is synthesized initially as an inactive proenzyme, which is activated by self-cleavage at a specific serine bond to produce a beta-subunit with a hydroxyl group at its C-terminus and an alpha-subunit with a pyruvoyl group at its N-terminus.

Its subcellular location is the cytoplasm. It catalyses the reaction L-aspartate + H(+) = beta-alanine + CO2. It functions in the pathway cofactor biosynthesis; (R)-pantothenate biosynthesis; beta-alanine from L-aspartate: step 1/1. Its function is as follows. Catalyzes the pyruvoyl-dependent decarboxylation of aspartate to produce beta-alanine. The chain is Aspartate 1-decarboxylase from Thermosipho africanus (strain TCF52B).